We begin with the raw amino-acid sequence, 349 residues long: Anthranilate phosphoribosyltransferase (349 aa).

5-phospho-alpha-D-ribose 1-diphosphate contacts are provided by residues G81, 84–85, T89, 91–94, 109–117, and A121; these read GD, NVST, and KHGNRAASS. G81 lines the anthranilate pocket. S93 lines the Mg(2+) pocket. N112 lines the anthranilate pocket. R167 provides a ligand contact to anthranilate. The Mg(2+) site is built by D226 and E227.

The protein belongs to the anthranilate phosphoribosyltransferase family. In terms of assembly, homodimer. It depends on Mg(2+) as a cofactor.

It catalyses the reaction N-(5-phospho-beta-D-ribosyl)anthranilate + diphosphate = 5-phospho-alpha-D-ribose 1-diphosphate + anthranilate. It participates in amino-acid biosynthesis; L-tryptophan biosynthesis; L-tryptophan from chorismate: step 2/5. In terms of biological role, catalyzes the transfer of the phosphoribosyl group of 5-phosphorylribose-1-pyrophosphate (PRPP) to anthranilate to yield N-(5'-phosphoribosyl)-anthranilate (PRA). This chain is Anthranilate phosphoribosyltransferase, found in Methylocella silvestris (strain DSM 15510 / CIP 108128 / LMG 27833 / NCIMB 13906 / BL2).